Reading from the N-terminus, the 535-residue chain is Ribonuclease Y (535 aa).

Residues 4–24 form a helical membrane-spanning segment; the sequence is IILLIVSALIGLILGYALISI. The segment at 118–141 is disordered; that stretch reads ENLSSKEKVLDSKEQSLTDKSKHI. The region spanning 225–285 is the KH domain; the sequence is TITSVHLPDD…IRREIARMTL (61 aa). Residues 351–444 form the HD domain; the sequence is VLRHSVEVGK…VAAADALSSA (94 aa).

It belongs to the RNase Y family.

The protein resides in the cell membrane. Its function is as follows. Endoribonuclease that initiates mRNA decay. The protein is Ribonuclease Y of Streptococcus pyogenes serotype M1.